A 321-amino-acid polypeptide reads, in one-letter code: ATP-dependent 6-phosphofructokinase (321 aa).

G11 is an ATP binding site. 21 to 25 (RAVVR) contributes to the ADP binding site. Residues 72–73 (RC) and 102–105 (GDGS) each bind ATP. D103 contacts Mg(2+). 126 to 128 (TID) provides a ligand contact to substrate. D128 functions as the Proton acceptor in the catalytic mechanism. R155 contacts ADP. Residues R163 and 170–172 (MGR) contribute to the substrate site. Residues 186–188 (GAE), R212, and 214–216 (KLH) contribute to the ADP site. Substrate contacts are provided by residues E223, R245, and 251–254 (HIQR).

This sequence belongs to the phosphofructokinase type A (PFKA) family. ATP-dependent PFK group I subfamily. Prokaryotic clade 'B1' sub-subfamily. In terms of assembly, homotetramer. It depends on Mg(2+) as a cofactor.

It is found in the cytoplasm. The catalysed reaction is beta-D-fructose 6-phosphate + ATP = beta-D-fructose 1,6-bisphosphate + ADP + H(+). It functions in the pathway carbohydrate degradation; glycolysis; D-glyceraldehyde 3-phosphate and glycerone phosphate from D-glucose: step 3/4. With respect to regulation, allosterically activated by ADP and other diphosphonucleosides, and allosterically inhibited by phosphoenolpyruvate. In terms of biological role, catalyzes the phosphorylation of D-fructose 6-phosphate to fructose 1,6-bisphosphate by ATP, the first committing step of glycolysis. The polypeptide is ATP-dependent 6-phosphofructokinase (Thermoanaerobacter pseudethanolicus (strain ATCC 33223 / 39E) (Clostridium thermohydrosulfuricum)).